A 665-amino-acid polypeptide reads, in one-letter code: Methionine--tRNA ligase (665 aa).

The 'HIGH' region signature appears at 12–22; it reads YYPSGKLHIGS. A 'KMSKS' region motif is present at residues 308–312; sequence KMSKS. Residue K311 participates in ATP binding. Positions 562–665 constitute a tRNA-binding domain; sequence TFDAVEIRVA…SSVPNGSIIG (104 aa).

This sequence belongs to the class-I aminoacyl-tRNA synthetase family. MetG type 2B subfamily. As to quaternary structure, homodimer.

It is found in the cytoplasm. The catalysed reaction is tRNA(Met) + L-methionine + ATP = L-methionyl-tRNA(Met) + AMP + diphosphate. In terms of biological role, is required not only for elongation of protein synthesis but also for the initiation of all mRNA translation through initiator tRNA(fMet) aminoacylation. This chain is Methionine--tRNA ligase (metG), found in Streptococcus pyogenes serotype M18 (strain MGAS8232).